Here is a 252-residue protein sequence, read N- to C-terminus: MKFTIIIPARYASTRLPRKPLLDILGKPMIQHVWERAKQAGGHRVIIATDHSEIAEVVTRFGGEVCLTSDKHSSGTERLAEVVSKMNISDDEIIVNVQGDEPLIPPCIIKQVAENLDNHQVNMATLAVKLTQRDELFNPNVVKVLSDKNGMALYFSRAAIPFARDNFPDCSDDFVTQNQYLRHIGIYAYRAGFIKQYVQWQPTALEQLESLEQLRALWNGEKIHLDIALETPEVGVDTQEDLERVRLILSNK.

It belongs to the KdsB family.

The protein localises to the cytoplasm. The catalysed reaction is 3-deoxy-alpha-D-manno-oct-2-ulosonate + CTP = CMP-3-deoxy-beta-D-manno-octulosonate + diphosphate. It functions in the pathway nucleotide-sugar biosynthesis; CMP-3-deoxy-D-manno-octulosonate biosynthesis; CMP-3-deoxy-D-manno-octulosonate from 3-deoxy-D-manno-octulosonate and CTP: step 1/1. The protein operates within bacterial outer membrane biogenesis; lipopolysaccharide biosynthesis. Its function is as follows. Activates KDO (a required 8-carbon sugar) for incorporation into bacterial lipopolysaccharide in Gram-negative bacteria. This chain is 3-deoxy-manno-octulosonate cytidylyltransferase 2, found in Actinobacillus pleuropneumoniae serotype 5b (strain L20).